The sequence spans 245 residues: Octanoyltransferase (245 aa).

In terms of domain architecture, BPL/LPL catalytic spans 54-242 (QNAHEQVWLL…SFEQIFGPII (189 aa)). Substrate is bound by residues 93-100 (RGGEFTYH), 173-175 (AIG), and 186-188 (GVS). C204 (acyl-thioester intermediate) is an active-site residue.

The protein belongs to the LipB family.

The protein localises to the cytoplasm. It carries out the reaction octanoyl-[ACP] + L-lysyl-[protein] = N(6)-octanoyl-L-lysyl-[protein] + holo-[ACP] + H(+). The protein operates within protein modification; protein lipoylation via endogenous pathway; protein N(6)-(lipoyl)lysine from octanoyl-[acyl-carrier-protein]: step 1/2. Catalyzes the transfer of endogenously produced octanoic acid from octanoyl-acyl-carrier-protein onto the lipoyl domains of lipoate-dependent enzymes. Lipoyl-ACP can also act as a substrate although octanoyl-ACP is likely to be the physiological substrate. This chain is Octanoyltransferase, found in Bartonella henselae (strain ATCC 49882 / DSM 28221 / CCUG 30454 / Houston 1) (Rochalimaea henselae).